The sequence spans 156 residues: Large ribosomal subunit protein uL15 (156 aa).

Positions 26-46 (GIGCGKGKTSGRGHKGQKARS) are disordered. A compositionally biased stretch (basic residues) spans 34 to 43 (TSGRGHKGQK).

The protein belongs to the universal ribosomal protein uL15 family. Part of the 50S ribosomal subunit.

Binds to the 23S rRNA. In Ehrlichia canis (strain Jake), this protein is Large ribosomal subunit protein uL15.